The chain runs to 70 residues: DNA gyrase inhibitor YacG (70 aa).

The span at 1–15 (MPEDKKAAAKVEPLR) shows a compositional bias: basic and acidic residues. The interval 1-22 (MPEDKKAAAKVEPLRKTRPCPE) is disordered. Zn(2+)-binding residues include Cys20, Cys23, Cys35, and Cys39.

Belongs to the DNA gyrase inhibitor YacG family. Interacts with GyrB. Zn(2+) serves as cofactor.

In terms of biological role, inhibits all the catalytic activities of DNA gyrase by preventing its interaction with DNA. Acts by binding directly to the C-terminal domain of GyrB, which probably disrupts DNA binding by the gyrase. The polypeptide is DNA gyrase inhibitor YacG (Rhizobium johnstonii (strain DSM 114642 / LMG 32736 / 3841) (Rhizobium leguminosarum bv. viciae)).